The primary structure comprises 282 residues: Uridylate-specific endoribonuclease B (282 aa).

The region spanning 4-278 (GDRELSALIQ…IGTTYPVPVK (275 aa)) is the EndoU domain. Active-site residues include histidine 156, histidine 172, and lysine 218.

This sequence belongs to the ENDOU family. In terms of assembly, monomer. The cofactor is Mn(2+).

It catalyses the reaction ribonucleotidyl-uridine-RNA = a 5'-end dephospho-uridine-RNA + a 3'-end 2',3'-cyclophospho-ribonucleotide-RNA. Endoribonuclease that cleaves single-stranded RNAs at 5' of uridylates and releases a product with a 2',3'-cyclic phosphate at the 3'-end. The UU and GU sites are more efficiently cleaved than CU and AU sites. This chain is Uridylate-specific endoribonuclease B (endoub), found in Danio rerio (Zebrafish).